We begin with the raw amino-acid sequence, 356 residues long: Magnesium-protoporphyrin IX monomethyl ester [oxidative] cyclase (356 aa).

The protein belongs to the AcsF family. Requires Fe cation as cofactor.

The catalysed reaction is Mg-protoporphyrin IX 13-monomethyl ester + 3 NADPH + 3 O2 + 2 H(+) = 3,8-divinyl protochlorophyllide a + 3 NADP(+) + 5 H2O. Its pathway is porphyrin-containing compound metabolism; chlorophyll biosynthesis (light-independent). Its function is as follows. Catalyzes the formation of the isocyclic ring in chlorophyll biosynthesis. Mediates the cyclase reaction, which results in the formation of divinylprotochlorophyllide (Pchlide) characteristic of all chlorophylls from magnesium-protoporphyrin IX 13-monomethyl ester (MgPMME). The sequence is that of Magnesium-protoporphyrin IX monomethyl ester [oxidative] cyclase from Synechococcus sp. (strain CC9605).